A 106-amino-acid chain; its full sequence is 3-phenylpropionate/cinnamic acid dioxygenase ferredoxin subunit (106 aa).

Residues 4–99 (IYACPVADVP…VHVEGGDIFI (96 aa)) form the Rieske domain. [2Fe-2S] cluster is bound by residues C42, H44, C62, and H65.

The protein belongs to the bacterial ring-hydroxylating dioxygenase ferredoxin component family. In terms of assembly, this dioxygenase system consists of four proteins: the two subunits of the hydroxylase component (HcaE and HcaF), a ferredoxin (HcaC) and a ferredoxin reductase (HcaD). The cofactor is [2Fe-2S] cluster.

It functions in the pathway aromatic compound metabolism; 3-phenylpropanoate degradation. In terms of biological role, part of the multicomponent 3-phenylpropionate dioxygenase, that converts 3-phenylpropionic acid (PP) and cinnamic acid (CI) into 3-phenylpropionate-dihydrodiol (PP-dihydrodiol) and cinnamic acid-dihydrodiol (CI-dihydrodiol), respectively. This protein seems to be a 2Fe-2S ferredoxin. The chain is 3-phenylpropionate/cinnamic acid dioxygenase ferredoxin subunit from Shigella flexneri serotype 5b (strain 8401).